Consider the following 71-residue polypeptide: Large ribosomal subunit protein bL31 (71 aa).

Residues Cys-16, Cys-18, Cys-37, and Cys-40 each coordinate Zn(2+).

The protein belongs to the bacterial ribosomal protein bL31 family. Type A subfamily. In terms of assembly, part of the 50S ribosomal subunit. Requires Zn(2+) as cofactor.

In terms of biological role, binds the 23S rRNA. This is Large ribosomal subunit protein bL31 from Pseudomonas putida (strain GB-1).